Here is a 255-residue protein sequence, read N- to C-terminus: Thrombin-like enzyme batroxobin (255 aa).

The signal sequence occupies residues 1-18 (MVLIRVIANLLILQVSYA). Positions 19–24 (QKSSEL) are excised as a propeptide. The Peptidase S1 domain occupies 25–247 (VIGGDECDIN…YLPWIQSIIA (223 aa)). 6 disulfide bridges follow: cysteine 31–cysteine 163, cysteine 50–cysteine 66, cysteine 98–cysteine 254, cysteine 142–cysteine 208, cysteine 174–cysteine 187, and cysteine 198–cysteine 223. Residues histidine 65 and aspartate 110 each act as charge relay system in the active site. A glycan (N-linked (GlcNAc...) asparagine) is linked at asparagine 170. Serine 202 (charge relay system) is an active-site residue. Residue asparagine 249 is glycosylated (N-linked (GlcNAc...) asparagine).

The protein belongs to the peptidase S1 family. Snake venom subfamily. In terms of assembly, monomer. In terms of tissue distribution, expressed by the venom gland.

The protein resides in the secreted. The enzyme catalyses Selective cleavage of Arg-|-Xaa bond in fibrinogen, to form fibrin, and release fibrinopeptide A. The specificity of further degradation of fibrinogen varies with species origin of the enzyme.. Functionally, thrombin-like snake venom serine protease. Cleaves Arg-Gly bonds in fibrinogen alpha chains (FGA). This is Thrombin-like enzyme batroxobin from Bothrops atrox (Barba amarilla).